We begin with the raw amino-acid sequence, 134 residues long: Profilin-2 (134 aa).

An intrachain disulfide couples C13 to C118. An Involved in PIP2 interaction motif is present at residues 84–100; the sequence is AVIRGKKGSGGITIKKT. Phosphothreonine is present on T114.

It belongs to the profilin family. Occurs in many kinds of cells as a complex with monomeric actin in a 1:1 ratio. Phosphorylated by MAP kinases.

It is found in the cytoplasm. Its subcellular location is the cytoskeleton. Its function is as follows. Binds to actin and affects the structure of the cytoskeleton. At high concentrations, profilin prevents the polymerization of actin, whereas it enhances it at low concentrations. The protein is Profilin-2 of Olea europaea (Common olive).